Reading from the N-terminus, the 116-residue chain is Protein MGF 110-2L (116 aa).

The signal sequence occupies residues 1-19 (MRFFSYLGLLLAGLASLAS).

This sequence belongs to the asfivirus MGF 110 family.

Plays a role in virus cell tropism, and may be required for efficient virus replication in macrophages. In Ornithodoros (relapsing fever ticks), this protein is Protein MGF 110-2L.